The following is a 494-amino-acid chain: 3-octaprenyl-4-hydroxybenzoate carboxy-lyase (494 aa).

N172 provides a ligand contact to Mn(2+). Residues 175–177, 189–191, and 194–195 each bind prenylated FMN; these read IYR, RWL, and RG. E238 serves as a coordination point for Mn(2+). The active-site Proton donor is the D287.

It belongs to the UbiD family. In terms of assembly, homohexamer. The cofactor is prenylated FMN. Mn(2+) is required as a cofactor.

It is found in the cell membrane. It catalyses the reaction a 4-hydroxy-3-(all-trans-polyprenyl)benzoate + H(+) = a 2-(all-trans-polyprenyl)phenol + CO2. Its pathway is cofactor biosynthesis; ubiquinone biosynthesis. Its function is as follows. Catalyzes the decarboxylation of 3-octaprenyl-4-hydroxy benzoate to 2-octaprenylphenol, an intermediate step in ubiquinone biosynthesis. This Escherichia coli O9:H4 (strain HS) protein is 3-octaprenyl-4-hydroxybenzoate carboxy-lyase.